A 511-amino-acid polypeptide reads, in one-letter code: Mesoderm induction early response protein 1 (511 aa).

Low complexity predominate over residues 1 to 16 (MAEPSVESSSPGGSAT). The interval 1 to 171 (MAEPSVESSS…EEESEEDEDY (171 aa)) is disordered. Ser10 carries the post-translational modification Phosphoserine. Residues 17–36 (SEDHEFDPSADMLVHDFDDE) are compositionally biased toward basic and acidic residues. The segment covering 37 to 46 (RTLEEEEMME) has biased composition (acidic residues). Over residues 57–66 (DLAREGDMPI) the composition is skewed to basic and acidic residues. Over residues 83–104 (EEEEEEEEEEEGEDDEDADNDD) the composition is skewed to acidic residues. The span at 128 to 143 (QSSNDDPSQSVTSQDA) shows a compositional bias: polar residues. At Ser140 the chain carries Phosphoserine. The residue at position 154 (Tyr154) is a Phosphotyrosine. 2 positions are modified to phosphoserine: Ser159 and Ser165. Residues 159–171 (SEIEEESEEDEDY) are compositionally biased toward acidic residues. Positions 179-277 (KEIMVGSMFQ…EALRRLRFNV (99 aa)) constitute an ELM2 domain. Lys238 participates in a covalent cross-link: Glycyl lysine isopeptide (Lys-Gly) (interchain with G-Cter in SUMO2). One can recognise an SANT domain in the interval 282-334 (EELSVWTEEECRNFEQGLKAYGKDFHLIQANKVRTRSVGECVAFYYMWKKSER). Residues 365–511 (ESESAASSRA…KFEEHENTND (147 aa)) form a disordered region. A phosphoserine mark is found at Ser366, Ser368, and Ser376. Over residues 397–408 (SSRNQNGVSSNG) the composition is skewed to polar residues. Composition is skewed to basic and acidic residues over residues 413 to 422 (LNKEEVKVEG) and 461 to 474 (ARNE…NERP). A Glycyl lysine isopeptide (Lys-Gly) (interchain with G-Cter in SUMO2) cross-link involves residue Lys419. Residues 481–493 (NSSGKESPGSSEF) are compositionally biased toward polar residues. Phosphoserine occurs at positions 482, 487, and 490. Residues 499–511 (SHGKFEEHENTND) are compositionally biased toward basic and acidic residues.

As to quaternary structure, interacts with HDAC1. Part of a complex containing at least CDYL, MIER1, MIER2, HDAC1 and HDAC2. Ubiquitously expressed. Isoform 1 is only expressed in testis.

The protein localises to the nucleus. Functionally, transcriptional repressor regulating the expression of a number of genes including SP1 target genes. Probably functions through recruitment of HDAC1 a histone deacetylase involved in chromatin silencing. This is Mesoderm induction early response protein 1 (Mier1) from Mus musculus (Mouse).